A 272-amino-acid chain; its full sequence is Phosphoribosylformylglycinamidine synthase subunit PurQ (272 aa).

Residues 8–272 (VLVMSGYGIN…FKNAVEYFNK (265 aa)) form the Glutamine amidotransferase type-1 domain. Catalysis depends on Cys98, which acts as the Nucleophile. Residues His225, Glu227, and Glu235 contribute to the active site.

Part of the FGAM synthase complex composed of 1 PurL, 1 PurQ and 2 PurS subunits.

The protein resides in the cytoplasm. It carries out the reaction N(2)-formyl-N(1)-(5-phospho-beta-D-ribosyl)glycinamide + L-glutamine + ATP + H2O = 2-formamido-N(1)-(5-O-phospho-beta-D-ribosyl)acetamidine + L-glutamate + ADP + phosphate + H(+). The enzyme catalyses L-glutamine + H2O = L-glutamate + NH4(+). It functions in the pathway purine metabolism; IMP biosynthesis via de novo pathway; 5-amino-1-(5-phospho-D-ribosyl)imidazole from N(2)-formyl-N(1)-(5-phospho-D-ribosyl)glycinamide: step 1/2. Its function is as follows. Part of the phosphoribosylformylglycinamidine synthase complex involved in the purines biosynthetic pathway. Catalyzes the ATP-dependent conversion of formylglycinamide ribonucleotide (FGAR) and glutamine to yield formylglycinamidine ribonucleotide (FGAM) and glutamate. The FGAM synthase complex is composed of three subunits. PurQ produces an ammonia molecule by converting glutamine to glutamate. PurL transfers the ammonia molecule to FGAR to form FGAM in an ATP-dependent manner. PurS interacts with PurQ and PurL and is thought to assist in the transfer of the ammonia molecule from PurQ to PurL. The protein is Phosphoribosylformylglycinamidine synthase subunit PurQ of Methanococcus maripaludis (strain DSM 14266 / JCM 13030 / NBRC 101832 / S2 / LL).